A 562-amino-acid chain; its full sequence is Laccase-2 (562 aa).

The signal sequence occupies residues 1–26 (MASAASSLPLLVSSLLLALFALGAHA). Plastocyanin-like domains lie at 34–150 (DIVM…PAAG) and 160–312 (DEAE…YAGV). Residues asparagine 39, asparagine 53, asparagine 72, and asparagine 80 are each glycosylated (N-linked (GlcNAc...) asparagine). The Cu cation site is built by histidine 84 and histidine 86. Asparagine 118 carries an N-linked (GlcNAc...) asparagine glycan. Cu cation contacts are provided by histidine 129 and histidine 131. 8 N-linked (GlcNAc...) asparagine glycosylation sites follow: asparagine 189, asparagine 244, asparagine 300, asparagine 328, asparagine 376, asparagine 386, asparagine 421, and asparagine 445. The 136-residue stretch at 411-546 (DFPDRPPARF…KMAFLVEDGS (136 aa)) folds into the Plastocyanin-like 3 domain. 7 residues coordinate Cu cation: histidine 463, histidine 466, histidine 468, histidine 525, cysteine 526, histidine 527, and histidine 531.

Belongs to the multicopper oxidase family. It depends on Cu cation as a cofactor.

The protein resides in the secreted. The protein localises to the extracellular space. It is found in the apoplast. The enzyme catalyses 4 hydroquinone + O2 = 4 benzosemiquinone + 2 H2O. Functionally, lignin degradation and detoxification of lignin-derived products. In Oryza sativa subsp. japonica (Rice), this protein is Laccase-2 (LAC2).